Consider the following 348-residue polypeptide: Dihydroorotase (348 aa).

Zn(2+)-binding residues include H17 and H19. Residues 19-21 (HLR) and N45 contribute to the substrate site. The Zn(2+) site is built by K103, H140, and H178. The residue at position 103 (K103) is an N6-carboxylysine. A substrate-binding site is contributed by H140. L223 is a substrate binding site. D251 is a binding site for Zn(2+). Residue D251 is part of the active site. H255 and A267 together coordinate substrate.

Belongs to the metallo-dependent hydrolases superfamily. DHOase family. Class II DHOase subfamily. As to quaternary structure, homodimer. Zn(2+) is required as a cofactor.

It catalyses the reaction (S)-dihydroorotate + H2O = N-carbamoyl-L-aspartate + H(+). The protein operates within pyrimidine metabolism; UMP biosynthesis via de novo pathway; (S)-dihydroorotate from bicarbonate: step 3/3. Its function is as follows. Catalyzes the reversible cyclization of carbamoyl aspartate to dihydroorotate. The sequence is that of Dihydroorotase from Yersinia pseudotuberculosis serotype O:1b (strain IP 31758).